The following is a 422-amino-acid chain: Roquefortine prenyltransferase roqD (422 aa).

Residue Glu-100 coordinates substrate. Residues Arg-113, Lys-200, and Tyr-202 each coordinate dimethylallyl diphosphate. Tyr-204 lines the substrate pocket. Positions 268, 270, 353, 416, and 420 each coordinate dimethylallyl diphosphate.

Belongs to the tryptophan dimethylallyltransferase family.

It functions in the pathway alkaloid biosynthesis. Roquefortine prenyltransferase; part of the gene cluster that mediates the biosynthesis of the mycotoxins roquefortine C and meleagrin. The first stage is catalyzed by the dipeptide synthase roqA which condenses histidine and tryptophan to produce histidyltryptophanyldiketopiperazine (HTD). HTD is then converted to roquefortine C through two possible pathways. In the first pathway, prenyltransferase roqD transforms HTD to the intermediate roquefortine D, which is in turn converted to roquefortine C by the cytochrome P450 monooxygenase roqR. In the second pathway, HTD is first converted to the intermediate dehydrohistidyltryptophanyldi-ketopiperazine (DHTD) by roqR which is then prenylated by roqD to form roquefortine C. Roquefortine C can be further transformed to meleagrin via three more reactions including oxydation to glandicolin A by roqM, which is further reduced to glandicoline B by roqO. Finally, glandicoline B is converted to meleagrin by the glandicoline B O-methyltransferase roqN. More studies identified further branching and additional metabolites produced by the roquefortine/meleagrin cluster, including roquefortine F, roquefortine L, roquefortine M, roquefortine N and neoxaline. The sequence is that of Roquefortine prenyltransferase roqD from Penicillium rubens (strain ATCC 28089 / DSM 1075 / NRRL 1951 / Wisconsin 54-1255) (Penicillium chrysogenum).